Reading from the N-terminus, the 514-residue chain is uncharacterized protein (514 aa).

Disordered stretches follow at residues 1–68, 109–244, and 272–484; these read MSSP…SESE, VPPP…RQAS, and RPAV…AQGC. Positions 368 to 384 are enriched in basic residues; the sequence is KPQKPKHSSPGKKPAGR. Basic and acidic residues predominate over residues 385–405; it reads KTRESQAAAREDNDPNRDEVP.

This is an uncharacterized protein from Homo sapiens (Human).